Consider the following 363-residue polypeptide: GTPase Obg (363 aa).

An Obg domain is found at 1–159 (MKFIDEAKIY…LELRLELRVL (159 aa)). The region spanning 160 to 338 (ADVGLLGLPN…LIYAISEALE (179 aa)) is the OBG-type G domain. GTP is bound by residues 166-173 (GLPNAGKS), 191-195 (FTTLH), 213-216 (DVPG), 284-287 (NKLD), and 319-321 (AAI). Serine 173 and threonine 193 together coordinate Mg(2+). The segment at 342–363 (RPEIGDLDDNDEDSDEIIRDTE) is disordered. The span at 346 to 356 (GDLDDNDEDSD) shows a compositional bias: acidic residues.

It belongs to the TRAFAC class OBG-HflX-like GTPase superfamily. OBG GTPase family. As to quaternary structure, monomer. Mg(2+) serves as cofactor.

It is found in the cytoplasm. Functionally, an essential GTPase which binds GTP, GDP and possibly (p)ppGpp with moderate affinity, with high nucleotide exchange rates and a fairly low GTP hydrolysis rate. Plays a role in control of the cell cycle, stress response, ribosome biogenesis and in those bacteria that undergo differentiation, in morphogenesis control. The chain is GTPase Obg from Dechloromonas aromatica (strain RCB).